A 493-amino-acid polypeptide reads, in one-letter code: Cytochrome c-552 (493 aa).

Residues M1–G25 form the signal peptide. A heme c-binding site is contributed by H116. Residues C144, C147, and K148 each contribute to the heme site. Positions 182, 185, 186, 224, 227, and 228 each coordinate heme c. Ca(2+) is bound by residues E230, Y231, K276, and Q278. Residue Y231 coordinates substrate. Residue H279 coordinates substrate. H290, C297, C300, H301, H315, C328, C331, H332, and H407 together coordinate heme c.

Belongs to the cytochrome c-552 family. Ca(2+) is required as a cofactor. The cofactor is heme c.

It is found in the periplasm. The catalysed reaction is 6 Fe(III)-[cytochrome c] + NH4(+) + 2 H2O = 6 Fe(II)-[cytochrome c] + nitrite + 8 H(+). It functions in the pathway nitrogen metabolism; nitrate reduction (assimilation). In terms of biological role, catalyzes the reduction of nitrite to ammonia, consuming six electrons in the process. The chain is Cytochrome c-552 from Bacteroides fragilis (strain ATCC 25285 / DSM 2151 / CCUG 4856 / JCM 11019 / LMG 10263 / NCTC 9343 / Onslow / VPI 2553 / EN-2).